The following is a 77-amino-acid chain: Large ribosomal subunit protein bL28 (77 aa).

The protein belongs to the bacterial ribosomal protein bL28 family.

This chain is Large ribosomal subunit protein bL28, found in Polynucleobacter asymbioticus (strain DSM 18221 / CIP 109841 / QLW-P1DMWA-1) (Polynucleobacter necessarius subsp. asymbioticus).